The chain runs to 318 residues: MVSLDPINAKFAAAIDGLPAPHQLGGPGKAFENLEELQRHEPANDIATQVIKVEGKYGPTSVTLFRSKALVDKPLPMIFYTHGGGWVMGSAKSFAVLVEDLARRTGAAVIFPDYTLAPHQTFPFPFEQSYEVLEYMIRHGKEYNLLVKTIALAGDSVGGHMAIAMMQMSLQRQLPATISQIVLWAPVTVTHKKYPSYTTFKDGPFLPEATMDWMIDTFIPSKSDRETALASPLTHLPDDVLSKFPPTIIFLSTVDPLVDEGVAFGQRLQGLGVDASVIKAEGQMHAFCLVTALRDGPTAQAVLELAALRLRKIFPDSA.

Active-site residues include serine 156, aspartate 255, and histidine 285.

Belongs to the AB hydrolase 3 family.

Functionally, esterase; part of the Fusarium detoxification of benzoxazolinone cluster 2 (FDB2) involved in the degradation of benzoxazolinones produced by the host plant. Maize, wheat, and rye produce the 2 benzoxazinone phytoanticipins 2,4-dihy-droxy-7-methoxy-1,4-benzoxazin-3-one (DIMBOA) and 2,4-dihydroxy-1,4-benzoxazin-3-one (DIBOA) that, due to their inherent instability once released, spontaneously degrade to the more stable corresponding benzoxazolinones, 6-methoxy-2-benzoxazolinone (MBOA) and 2-benzoxazolinone (BOA), respectively. The first step in the detoxification of benzoxazolinones involves the hydrolysis of the cyclic ester bond of benzoxazolinones by the FDB1 cluster gamma-lactamase MBL1 to aminophenols. MBL1 is able to convert BOA into 2-aminophenol (2-AP), as well as MBOA into 5-methoxy-2-aminophenol (2-AMP). The FDB2 cluster N-malonyltransferase FDB2/NAT1 then metabolizes aminophenols via N-malonylation to non-toxic malonamic acids. FDB2/NAT1 converts 2-AP into N-(2-hydroxyphenyl) malonamic acid (HPMA) and 2-AMP into N-(2-hydroxy-4-methoxyphenyl) malonamic acid (HMPMA). The duplicated dienlactone hydrolases DLH1 and DLH2 may provide redundant function for hydrolyzing the lactone moiety in the BOA molecule. The roles of the amidases an other enzymes encoded by the 2 FDB clusters have not been identified so far. This Gibberella moniliformis (strain M3125 / FGSC 7600) (Maize ear and stalk rot fungus) protein is Esterase FVEG_12639.